The primary structure comprises 323 residues: Acetyl esterase (323 aa).

The Involved in the stabilization of the negatively charged intermediate by the formation of the oxyanion hole signature appears at 91–93 (HGG). Active-site residues include serine 165, aspartate 262, and histidine 292.

The protein belongs to the 'GDXG' lipolytic enzyme family. As to quaternary structure, homodimer. Interacts with MalT and MelA.

It localises to the cytoplasm. Functionally, displays esterase activity towards short chain fatty esters (acyl chain length of up to 8 carbons). Able to hydrolyze triacetylglycerol (triacetin) and tributyrylglycerol (tributyrin), but not trioleylglycerol (triolein) or cholesterol oleate. Negatively regulates MalT activity by antagonizing maltotriose binding. Inhibits MelA galactosidase activity. This Salmonella paratyphi B (strain ATCC BAA-1250 / SPB7) protein is Acetyl esterase.